The chain runs to 353 residues: Alanine racemase (353 aa).

Lys-33 acts as the Proton acceptor; specific for D-alanine in catalysis. N6-(pyridoxal phosphate)lysine is present on Lys-33. Arg-129 lines the substrate pocket. Residue Tyr-250 is the Proton acceptor; specific for L-alanine of the active site. Substrate is bound at residue Met-298.

Belongs to the alanine racemase family. Pyridoxal 5'-phosphate is required as a cofactor.

The catalysed reaction is L-alanine = D-alanine. It participates in amino-acid biosynthesis; D-alanine biosynthesis; D-alanine from L-alanine: step 1/1. Functionally, catalyzes the interconversion of L-alanine and D-alanine. May also act on other amino acids. This chain is Alanine racemase (alr), found in Azoarcus sp. (strain BH72).